The chain runs to 432 residues: NADH-quinone oxidoreductase subunit D (432 aa).

It belongs to the complex I 49 kDa subunit family. In terms of assembly, NDH-1 is composed of 14 different subunits. Subunits NuoB, C, D, E, F, and G constitute the peripheral sector of the complex.

The protein resides in the cell membrane. The catalysed reaction is a quinone + NADH + 5 H(+)(in) = a quinol + NAD(+) + 4 H(+)(out). Its function is as follows. NDH-1 shuttles electrons from NADH, via FMN and iron-sulfur (Fe-S) centers, to quinones in the respiratory chain. The immediate electron acceptor for the enzyme in this species is believed to be a menaquinone. Couples the redox reaction to proton translocation (for every two electrons transferred, four hydrogen ions are translocated across the cytoplasmic membrane), and thus conserves the redox energy in a proton gradient. The polypeptide is NADH-quinone oxidoreductase subunit D (Mycobacterium marinum (strain ATCC BAA-535 / M)).